A 349-amino-acid polypeptide reads, in one-letter code: Core protein VP7 (349 aa).

The N-linked (GlcNAc...) asparagine; by host glycan is linked to Asn-287.

Belongs to the orbivirus VP7 family. Homotrimer that assemble in a complex of 260 capsomers on an inner scaffold composed of VP3.

The protein localises to the virion. The VP7 protein is one of the five proteins (with VP1, VP3, VP4, and VP6) which form the inner capsid of the virus. This Antilocapra americana (Pronghorn) protein is Core protein VP7 (Segment-7).